Reading from the N-terminus, the 189-residue chain is UPF0301 protein CTA_0231 (189 aa).

Belongs to the UPF0301 (AlgH) family.

In Chlamydia trachomatis serovar A (strain ATCC VR-571B / DSM 19440 / HAR-13), this protein is UPF0301 protein CTA_0231.